The chain runs to 362 residues: Apelin receptor A (362 aa).

Over 1-37 (METEGLSPMLYEDDYYYGNETGLQPCDETDWDFSYSL) the chain is Extracellular. N-linked (GlcNAc...) asparagine glycosylation occurs at Asn-19. Intrachain disulfides connect Cys-26-Cys-286 and Cys-108-Cys-185. The chain crosses the membrane as a helical span at residues 38-58 (LPVFYMIVFVLGLSGNGVVIF). Topologically, residues 59–76 (TVWKSKPKRRSADTYIGN) are cytoplasmic. A helical membrane pass occupies residues 77-97 (LALADLAFVVTLPLWATYTAL). The Extracellular portion of the chain corresponds to 98–110 (GFHWPFGSALCKL). Residues 111–131 (SSYLVLLNMFASVFCLTCLSF) traverse the membrane as a helical segment. Residues 132–151 (DRYLAIVHSLSSAKLRSRSS) lie on the Cytoplasmic side of the membrane. The chain crosses the membrane as a helical span at residues 152 to 172 (IIVSLAVIWLFSGLLALPSLI). Residues 173–199 (LRDTRVEGNNTICDLDFSGVSSKENEN) lie on the Extracellular side of the membrane. The N-linked (GlcNAc...) asparagine glycan is linked to Asn-181. The helical transmembrane segment at 200 to 220 (FWIGGLSILTTVPGFLLPLLL) threads the bilayer. Topologically, residues 221–248 (MTIFYCFIGGKVTMHFQNLKKEEQKKKR) are cytoplasmic. A helical membrane pass occupies residues 249-269 (LLKIIITLVVVFAICWLPFHI). Over 270 to 296 (LKTIHFLDLMGFLELSCSTQNIIVSLH) the chain is Extracellular. The chain crosses the membrane as a helical span at residues 297–317 (PYATCLAYVNSCLNPFLYAFF). Topologically, residues 318–362 (DLRFRSQCFFFFGFKKVLQGHLSNTSSSLSAQTQKSEIHSLATKV) are cytoplasmic.

Belongs to the G-protein coupled receptor 1 family. As to expression, expressed in all blood vessels including the posterior cardinal vein, intersomitic veins and the vitelline vein network. At the gastrula stage, exclusively expressed in the mesodermal layer and at the neurula stage in the lateral plate mesoderm. Larval expression is observed in the endothelium of the primary blood vessels and the forming heart.

Its subcellular location is the cell membrane. Its function is as follows. G protein-coupled receptor for peptide hormones apelin (apln) and apelin receptor early endogenous ligand (apela), that plays a role in the regulation of normal cardiovascular function and fluid homeostasis. When acting as apelin receptor, activates both G(i) protein pathway that inhibits adenylate cyclase activity, and the beta-arrestin pathway that promotes internalization of the receptor. Also functions as mechanoreceptor that is activated by pathological stimuli in a G-protein-independent fashion to induce beta-arrestin signaling, hence eliciting cardiac hypertrophy. However, the presence of apelin ligand blunts cardiac hypertrophic induction from APLNR/APJ on response to pathological stimuli. Plays a key role in early development such as gastrulation, blood vessels formation and heart morphogenesis by acting as a receptor for apela hormone, promoting endoderm and mesendoderm cell migration and regulating the migration of cells fated to become myocardial progenitors, respectively. Promotes angioblast migration toward the embryonic midline, i.e. the position of the future vessel formation, during vasculogenesis. May promote sinus venosus (SV)-derived endothelial cells migration into the developing heart to promote coronary blood vessel development. Required for cardiovascular development, particularly for intersomitic vein angiogenesis by acting as a receptor for apln hormone. Also plays a role in various processes in adults such as regulation of blood vessel formation, blood pressure, heart contractility, and heart failure. Acts upstream of the i/o type of G-alpha proteins in the differentiation of endothelium, erythroid cells, myeloid cells and cardiomyocytes. This Xenopus laevis (African clawed frog) protein is Apelin receptor A (aplnr-a).